Consider the following 210-residue polypeptide: MPPYTIVYFPVRGRCEATRMLLADQGQSWKEEVVTIDVWLQGSLKSTCLYGQLPKFEDGDLTLYQSNAILRHLGRSLGLYGKDQKEAALVDMVNDGVEDLRCKYGTLIYTNYENGKDDYVKALPGHLKPFETLLSQNQGGKAFIVGNQISFADYNLLDLLLVHQVLAPGCLDNFPLLSAYVARLSARPKIKAFLSSPDHLNRPINGNGKQ.

Residues 2 to 81 (PPYTIVYFPV…HLGRSLGLYG (80 aa)) form the GST N-terminal domain. Tyrosine 4 carries the phosphotyrosine; by EGFR modification. Glutathione contacts are provided by residues tyrosine 8, arginine 14, tryptophan 39, lysine 45, and 52–53 (QL). At threonine 62 the chain carries Phosphothreonine. 65–66 (QS) contributes to the glutathione binding site. The region spanning 83–204 (DQKEAALVDM…SSPDHLNRPI (122 aa)) is the GST C-terminal domain. 2 positions are modified to N6-succinyllysine: lysine 103 and lysine 116. An N6-acetyllysine modification is found at lysine 128.

Belongs to the GST superfamily. Pi family. In terms of assembly, homodimer. Interacts with CDK5. Present in kidney, lung, testis and placenta, very low levels in liver.

It is found in the cytoplasm. The protein localises to the mitochondrion. The protein resides in the nucleus. The enzyme catalyses RX + glutathione = an S-substituted glutathione + a halide anion + H(+). It carries out the reaction prostaglandin J2 + glutathione = prostaglandin J2-S-(R)-glutathione. It catalyses the reaction prostaglandin J2 + glutathione = prostaglandin J2-S-(S)-glutathione. The catalysed reaction is prostaglandin A2 + glutathione = prostaglandin A2-S-(S)-glutathione. The enzyme catalyses 11(S)-hydroxy-14(S),15(S)-epoxy-(5Z,8Z,12E)-eicosatrienoate + glutathione = (11S,15S)-dihydroxy-14(R)-S-glutathionyl-(5Z,8Z,12E)-eicosatrienoate. Functionally, conjugation of reduced glutathione to a wide number of exogenous and endogenous hydrophobic electrophiles. Involved in the formation of glutathione conjugates of both prostaglandin A2 (PGA2) and prostaglandin J2 (PGJ2). Participates in the formation of novel hepoxilin regioisomers. Negatively regulates CDK5 activity via p25/p35 translocation to prevent neurodegeneration. This Rattus norvegicus (Rat) protein is Glutathione S-transferase P.